The sequence spans 1124 residues: Translation initiation factor IF-2 (1124 aa).

The span at I32–I41 shows a compositional bias: low complexity. 2 disordered regions span residues I32–H451 and L480–R523. Polar residues predominate over residues A94–K104. Positions V134–A173 are enriched in low complexity. Polar residues predominate over residues G192 to V203. A compositionally biased stretch (low complexity) spans S214 to P227. Composition is skewed to basic and acidic residues over residues S235–G246 and P261–R272. 2 stretches are compositionally biased toward low complexity: residues G274–P283 and R411–R422. The span at G425–R439 shows a compositional bias: basic and acidic residues. Basic residues-rich tracts occupy residues A484–A493 and L500–R514. The tr-type G domain occupies R615 to L787. The G1 stretch occupies residues G624–T631. G624–T631 lines the GTP pocket. Residues G649 to H653 are G2. A G3 region spans residues D674–G677. Residues D674–H678 and N728–D731 contribute to the GTP site. The segment at N728–D731 is G4. Residues S764–I766 form a G5 region.

This sequence belongs to the TRAFAC class translation factor GTPase superfamily. Classic translation factor GTPase family. IF-2 subfamily.

The protein localises to the cytoplasm. Functionally, one of the essential components for the initiation of protein synthesis. Protects formylmethionyl-tRNA from spontaneous hydrolysis and promotes its binding to the 30S ribosomal subunits. Also involved in the hydrolysis of GTP during the formation of the 70S ribosomal complex. The sequence is that of Translation initiation factor IF-2 from Prochlorococcus marinus (strain MIT 9303).